The sequence spans 661 residues: UvrABC system protein B (661 aa).

One can recognise a Helicase ATP-binding domain in the interval 28–414 (KGVKEGKRHQ…HTDEMIEQII (387 aa)). 41–48 (GATGTGKT) contributes to the ATP binding site. The Beta-hairpin motif lies at 94-117 (YYDYYQPEAYVPSTDTFIEKDASI). Residues 432-598 (QIDDLLSEIQ…TINKKIHDVI (167 aa)) enclose the Helicase C-terminal domain. Residues 604 to 625 (NDETNEKQQTELPKKMTKKERQ) are disordered. A compositionally biased stretch (basic and acidic residues) spans 607–617 (TNEKQQTELPK). A UVR domain is found at 625–660 (QKTIENIEKEMKKAAKDLDFEKATELRDMLFELKSE).

It belongs to the UvrB family. In terms of assembly, forms a heterotetramer with UvrA during the search for lesions. Interacts with UvrC in an incision complex.

It localises to the cytoplasm. Its function is as follows. The UvrABC repair system catalyzes the recognition and processing of DNA lesions. A damage recognition complex composed of 2 UvrA and 2 UvrB subunits scans DNA for abnormalities. Upon binding of the UvrA(2)B(2) complex to a putative damaged site, the DNA wraps around one UvrB monomer. DNA wrap is dependent on ATP binding by UvrB and probably causes local melting of the DNA helix, facilitating insertion of UvrB beta-hairpin between the DNA strands. Then UvrB probes one DNA strand for the presence of a lesion. If a lesion is found the UvrA subunits dissociate and the UvrB-DNA preincision complex is formed. This complex is subsequently bound by UvrC and the second UvrB is released. If no lesion is found, the DNA wraps around the other UvrB subunit that will check the other stand for damage. The polypeptide is UvrABC system protein B (Staphylococcus haemolyticus (strain JCSC1435)).